Consider the following 252-residue polypeptide: ATP-dependent L-serine kinase (252 aa).

Residue E35 is part of the active site. V73 is a binding site for O-phospho-L-serine. A Mg(2+)-binding site is contributed by D74. Residues G75, H76, H77, W107, K231, T233, and H235 each coordinate O-phospho-L-serine.

The protein belongs to the SerK family. In terms of assembly, monomer. It depends on Mg(2+) as a cofactor.

It carries out the reaction L-serine + ATP = O-phospho-L-serine + ADP + H(+). Functionally, free serine kinase that uses ATP to phosphorylate L-serine to yield O-phospho-L-serine and ADP. Can use ATP, UTP, CTP, GTP and the inorganic polyphosphates triphosphate and tetraphosphate as phosphate donors, with a preference for nucleoside 5'-triphosphates, but cannot use ADP. The catalytic efficiency is highest for ATP. Is specific for L-serine and cannot phosphorylate structurally similar compounds such as D-serine, L-threonine, L-homoserine, hydroxypyruvate, 3-hydroxypropionate and DL-glycerate. Likely contributes to serine metabolism, including cysteine biosynthesis. This is ATP-dependent L-serine kinase from Staphylothermus marinus (strain ATCC 43588 / DSM 3639 / JCM 9404 / F1).